The primary structure comprises 333 residues: Adenosine deaminase (333 aa).

Histidine 12 and histidine 14 together coordinate Zn(2+). Substrate-binding residues include histidine 14, aspartate 16, and glycine 170. Histidine 197 serves as a coordination point for Zn(2+). The active-site Proton donor is glutamate 200. Aspartate 278 contributes to the Zn(2+) binding site. Aspartate 279 serves as a coordination point for substrate.

It belongs to the metallo-dependent hydrolases superfamily. Adenosine and AMP deaminases family. Adenosine deaminase subfamily. The cofactor is Zn(2+).

It carries out the reaction adenosine + H2O + H(+) = inosine + NH4(+). The catalysed reaction is 2'-deoxyadenosine + H2O + H(+) = 2'-deoxyinosine + NH4(+). Functionally, catalyzes the hydrolytic deamination of adenosine and 2-deoxyadenosine. This chain is Adenosine deaminase, found in Escherichia coli O157:H7.